The chain runs to 304 residues: E3 ubiquitin-protein ligase CHIP (304 aa).

Over residues 1 to 10 (MKGKEEKEGG) the composition is skewed to basic and acidic residues. The segment at 1 to 30 (MKGKEEKEGGARLGTGGGGSPDKSPSAQEL) is disordered. Residue K2 forms a Glycyl lysine isopeptide (Lys-Gly) (interchain with G-Cter in ubiquitin) linkage. Positions 11–20 (ARLGTGGGGS) are enriched in gly residues. S20 carries the phosphoserine modification. A Glycyl lysine isopeptide (Lys-Gly) (interchain with G-Cter in ubiquitin) cross-link involves residue K23. Phosphoserine occurs at positions 24 and 26. TPR repeat units follow at residues 27 to 60 (AQEL…NPLV), 61 to 94 (AVYY…DGQS), and 96 to 128 (KAHF…AKEQ). Residues 102 to 201 (GQCQLEMESY…GHIRAQQACI (100 aa)) are required for interaction with MAPK7. The interval 143 to 197 (AKKKRWNSIEERRIHQESELHSYLTRLIAAERERELEECQRNHEGHEDDGHIRAQ) is required for interaction with and ubiquitination of MYOCD. The tract at residues 144–198 (KKKRWNSIEERRIHQESELHSYLTRLIAAERERELEECQRNHEGHEDDGHIRAQQ) is required for interaction with FOXO1. The interval 144–304 (KKKRWNSIEE…ISENGWVEDY (161 aa)) is required for ubiquitination of FOXO1. Position 150 is a phosphoserine (S150). Residues K222 and K256 each participate in a glycyl lysine isopeptide (Lys-Gly) (interchain with G-Cter in ubiquitin) cross-link. The 75-residue stretch at 227-301 (DIPDYLCGKI…DAFISENGWV (75 aa)) folds into the U-box domain. S274 carries the post-translational modification Phosphoserine.

Homodimer. Interacts with BAG2, and with the E2 ubiquitin conjugating enzymes UBE2D1, UBE2D2 and UBE2D3. Detected in a ternary complex containing STUB1, HSPA1A and HSPBP1. Part of a complex composed of STUB1/CHIP, VCP/p97, CHRNA3, and UBXN2A that modulates the ubiquitination and endoplasmic reticulum-associated degradation (ERAD) of CHRNA3. Within the complex UBXN2A acts as a scaffold protein required for the interaction of CHRNA3 with VCP/p97, this interaction also inhibits CHRNA3 ubiquitination by STUB1/CHIP and subsequently ERAD. Interacts with MKKS. Interacts with DNAAF4. Interacts (via the U-box domain) with the UBE2V2-UBE2N heterodimer; the complex has a specific 'Lys-63'-linked polyubiquitination activity. Interacts (when monoubiquitinated) with ATXN3. Interacts with UBE2W. Interacts with DNAJB6. Interacts with FLCN and HSP90AA1. Interacts with HSP90. Interacts with UBE2N and UBE2V1. Interacts (via TPR repeats) with HSPA8 (via C-terminus). Interacts (via TPR repeats) with HSPA1A (via C-terminus). Interacts with the non-acetylated form of HSPA1A and HSPA1B. Interacts with SMAD3 and HSP90AB1. Interacts with UBE4B. Interacts with PRMT5. Interacts with MYOCD (via C-terminus). Interacts with FOXO1 (when phosphorylated on 'Ser-253'). Interacts with MAPK7/ERK5; the interaction is enhanced in the presence of IGF1 or MAP2K5 and promotes STUB1/CHIP E3 ligase activity. Interacts with and ubiquitinates ESR1; the interaction is promoted in the absence of estradiol (17-beta-estradiol/E2). Interacts with ESR2. Interacts with and ubiquitinates NFATC3; HSPA1A/HSP70 is required as a co-chaperone. In macrophages, interacts with PAQR3; the interaction promotes PPARG poylubiquitination and STUB1-mediated degradation. Component of the chaperone-assisted selective autophagy (CASA) complex consisting of BAG3, HSPA8/HSC70, HSPB8 and STUB1/CHIP. In terms of processing, auto-ubiquitinated; mediated by UBE2D1 and UBE2D2 and enhanced in the presence of MAP2K5. Monoubiquitinated at Lys-2 following cell stress by UBE2W, promoting the interaction with ATXN3. In terms of tissue distribution, expressed in the brain.

Its subcellular location is the cytoplasm. The protein resides in the nucleus. It is found in the mitochondrion. It catalyses the reaction S-ubiquitinyl-[E2 ubiquitin-conjugating enzyme]-L-cysteine + [acceptor protein]-L-lysine = [E2 ubiquitin-conjugating enzyme]-L-cysteine + N(6)-ubiquitinyl-[acceptor protein]-L-lysine.. Its pathway is protein modification; protein ubiquitination. In terms of biological role, E3 ubiquitin-protein ligase which targets misfolded chaperone substrates towards proteasomal degradation. Plays a role in the maintenance of mitochondrial morphology and promotes mitophagic removal of dysfunctional mitochondria; thereby acts as a protector against apoptosis in response to cellular stress. Negatively regulates vascular smooth muscle contraction, via degradation of the transcriptional activator MYOCD and subsequent loss of transcription of genes involved in vascular smooth muscle contraction. Promotes survival and proliferation of cardiac smooth muscle cells via ubiquitination and degradation of FOXO1, resulting in subsequent repression of FOXO1-mediated transcription of pro-apoptotic genes. Ubiquitinates ICER-type isoforms of CREM and targets them for proteasomal degradation, thereby acts as a positive effector of MAPK/ERK-mediated inhibition of apoptosis in cardiomyocytes. Inhibits lipopolysaccharide-induced apoptosis and hypertrophy in cardiomyocytes, via ubiquitination and subsequent proteasomal degradation of NFATC3. Collaborates with ATXN3 in the degradation of misfolded chaperone substrates: ATXN3 restricting the length of ubiquitin chain attached to STUB1/CHIP substrates and preventing further chain extension. Ubiquitinates NOS1 in concert with Hsp70 and Hsp40. Modulates the activity of several chaperone complexes, including Hsp70, Hsc70 and Hsp90. Ubiquitinates CHRNA3 targeting it for endoplasmic reticulum-associated degradation in cortical neurons, as part of the STUB1-VCP-UBXN2A complex. Ubiquitinates and promotes ESR1 proteasomal degradation in response to age-related circulating estradiol (17-beta-estradiol/E2) decline, thereby promotes neuronal apoptosis in response to ischemic reperfusion injury. Mediates transfer of non-canonical short ubiquitin chains to HSPA8 that have no effect on HSPA8 degradation. Mediates polyubiquitination of DNA polymerase beta (POLB) at 'Lys-41', 'Lys-61' and 'Lys-81', thereby playing a role in base-excision repair: catalyzes polyubiquitination by amplifying the HUWE1/ARF-BP1-dependent monoubiquitination and leading to POLB-degradation by the proteasome. Mediates polyubiquitination of CYP3A4. Ubiquitinates EPHA2 and may regulate the receptor stability and activity through proteasomal degradation. Acts as a co-chaperone for HSPA1A and HSPA1B chaperone proteins and promotes ubiquitin-mediated protein degradation. Negatively regulates the suppressive function of regulatory T-cells (Treg) during inflammation by mediating the ubiquitination and degradation of FOXP3 in a HSPA1A/B-dependent manner. Catalyzes monoubiquitination of SIRT6, preventing its degradation by the proteasome. Likely mediates polyubiquitination and down-regulates plasma membrane expression of PD-L1/CD274, an immune inhibitory ligand critical for immune tolerance to self and antitumor immunity. Negatively regulates TGF-beta signaling by modulating the basal level of SMAD3 via ubiquitin-mediated degradation. Plays a role in the degradation of TP53. Mediates ubiquitination of RIPK3 leading to its subsequent proteasome-dependent degradation. May regulate myosin assembly in striated muscles together with UBE4B and VCP/p97 by targeting myosin chaperone UNC45B for proteasomal degradation. Ubiquitinates PPARG in macrophages playing a role in M2 macrophages polarization and angiogenesis. The polypeptide is E3 ubiquitin-protein ligase CHIP (Mus musculus (Mouse)).